The following is a 203-amino-acid chain: ATP-dependent Clp protease proteolytic subunit 2 (203 aa).

The active-site Nucleophile is the serine 98. The active site involves histidine 123.

It belongs to the peptidase S14 family. As to quaternary structure, fourteen ClpP subunits assemble into 2 heptameric rings which stack back to back to give a disk-like structure with a central cavity, resembling the structure of eukaryotic proteasomes.

The protein resides in the cytoplasm. It catalyses the reaction Hydrolysis of proteins to small peptides in the presence of ATP and magnesium. alpha-casein is the usual test substrate. In the absence of ATP, only oligopeptides shorter than five residues are hydrolyzed (such as succinyl-Leu-Tyr-|-NHMec, and Leu-Tyr-Leu-|-Tyr-Trp, in which cleavage of the -Tyr-|-Leu- and -Tyr-|-Trp bonds also occurs).. In terms of biological role, cleaves peptides in various proteins in a process that requires ATP hydrolysis. Has a chymotrypsin-like activity. Plays a major role in the degradation of misfolded proteins. This chain is ATP-dependent Clp protease proteolytic subunit 2, found in Chlamydia pneumoniae (Chlamydophila pneumoniae).